Here is a 154-residue protein sequence, read N- to C-terminus: Interleukin-2 (154 aa).

Residues methionine 1–serine 20 form the signal peptide. Cysteines 78 and 126 form a disulfide. Asparagine 111 carries an N-linked (GlcNAc...) asparagine glycan.

This sequence belongs to the IL-2 family.

It localises to the secreted. Functionally, cytokine produced by activated CD4-positive helper T-cells and to a lesser extend activated CD8-positive T-cells and natural killer (NK) cells that plays pivotal roles in the immune response and tolerance. Binds to a receptor complex composed of either the high-affinity trimeric IL-2R (IL2RA/CD25, IL2RB/CD122 and IL2RG/CD132) or the low-affinity dimeric IL-2R (IL2RB and IL2RG). Interaction with the receptor leads to oligomerization and conformation changes in the IL-2R subunits resulting in downstream signaling starting with phosphorylation of JAK1 and JAK3. In turn, JAK1 and JAK3 phosphorylate the receptor to form a docking site leading to the phosphorylation of several substrates including STAT5. This process leads to activation of several pathways including STAT, phosphoinositide-3-kinase/PI3K and mitogen-activated protein kinase/MAPK pathways. Functions as a T-cell growth factor and can increase NK-cell cytolytic activity as well. Promotes strong proliferation of activated B-cells and subsequently immunoglobulin production. Plays a pivotal role in regulating the adaptive immune system by controlling the survival and proliferation of regulatory T-cells, which are required for the maintenance of immune tolerance. Moreover, participates in the differentiation and homeostasis of effector T-cell subsets, including Th1, Th2, Th17 as well as memory CD8-positive T-cells. This is Interleukin-2 (IL2) from Felis catus (Cat).